We begin with the raw amino-acid sequence, 191 residues long: ATP synthase subunit b 1 (191 aa).

A helical membrane pass occupies residues 7-25 (RMRILCLCATTLLMAGSAL).

This sequence belongs to the ATPase B chain family. In terms of assembly, F-type ATPases have 2 components, F(1) - the catalytic core - and F(0) - the membrane proton channel. F(1) has five subunits: alpha(3), beta(3), gamma(1), delta(1), epsilon(1). F(0) has three main subunits: a(1), b(2) and c(10-14). The alpha and beta chains form an alternating ring which encloses part of the gamma chain. F(1) is attached to F(0) by a central stalk formed by the gamma and epsilon chains, while a peripheral stalk is formed by the delta and b chains.

The protein resides in the cell inner membrane. In terms of biological role, f(1)F(0) ATP synthase produces ATP from ADP in the presence of a proton or sodium gradient. F-type ATPases consist of two structural domains, F(1) containing the extramembraneous catalytic core and F(0) containing the membrane proton channel, linked together by a central stalk and a peripheral stalk. During catalysis, ATP synthesis in the catalytic domain of F(1) is coupled via a rotary mechanism of the central stalk subunits to proton translocation. Component of the F(0) channel, it forms part of the peripheral stalk, linking F(1) to F(0). The chain is ATP synthase subunit b 1 from Syntrophotalea carbinolica (strain DSM 2380 / NBRC 103641 / GraBd1) (Pelobacter carbinolicus).